Here is a 244-residue protein sequence, read N- to C-terminus: Demethylmenaquinone methyltransferase (244 aa).

S-adenosyl-L-methionine is bound by residues T65, D86, and 114 to 115; that span reads DA.

It belongs to the class I-like SAM-binding methyltransferase superfamily. MenG/UbiE family.

The catalysed reaction is a 2-demethylmenaquinol + S-adenosyl-L-methionine = a menaquinol + S-adenosyl-L-homocysteine + H(+). Its pathway is quinol/quinone metabolism; menaquinone biosynthesis; menaquinol from 1,4-dihydroxy-2-naphthoate: step 2/2. Functionally, methyltransferase required for the conversion of demethylmenaquinol (DMKH2) to menaquinol (MKH2). This is Demethylmenaquinone methyltransferase from Lactobacillus johnsonii (strain CNCM I-12250 / La1 / NCC 533).